The following is a 265-amino-acid chain: Pre-mRNA-splicing factor cwf15 (265 aa).

Disordered regions lie at residues 1–31 (MTTA…ALPA) and 62–197 (AAHF…ALEQ). Acidic residues predominate over residues 113–125 (EADEDASDSDDSV). Residues 143-155 (SNSQESVDSSNSE) are compositionally biased toward low complexity. Residues 155–205 (ESSDEESDSEDETQQLLRELENIKQERKREQMLQEEKNRALEQEKREREIA) adopt a coiled-coil conformation. Over residues 156 to 167 (SSDEESDSEDET) the composition is skewed to acidic residues. Residues 172 to 197 (RELENIKQERKREQMLQEEKNRALEQ) are compositionally biased toward basic and acidic residues.

Belongs to the CWC15 family. As to quaternary structure, belongs to the 40S cdc5-associated complex (or cwf complex), a spliceosome sub-complex reminiscent of a late-stage spliceosome composed of the U2, U5 and U6 snRNAs and at least brr2, cdc5, cwf2/prp3, cwf3/syf1, cwf4/syf3, cwf5/ecm2, spp42/cwf6, cwf7/spf27, cwf8, cwf9, cwf10, cwf11, cwf12, prp45/cwf13, cwf14, cwf15, cwf16, cwf17, cwf18, cwf19, cwf20, cwf21, cwf22, cwf23, cwf24, cwf25, cwf26, cyp7/cwf27, cwf28, cwf29/ist3, lea1, msl1, prp5/cwf1, prp10, prp12/sap130, prp17, prp22, sap61, sap62, sap114, sap145, slu7, smb1, smd1, smd3, smf1, smg1 and syf2.

It localises to the nucleus. Involved in pre-mRNA splicing. The chain is Pre-mRNA-splicing factor cwf15 (cwf15) from Schizosaccharomyces pombe (strain 972 / ATCC 24843) (Fission yeast).